A 690-amino-acid chain; its full sequence is MANDPRNFPQRKLLVTCALPYANGSIHLGHMLEHIQADIWVRYQRLRGNIVNFICADDAHGTPIMLKAQQMGMSPEEMIAAVSIEHQKDFAGFDISFDNYHSTHSDENRELASHIYLQLKKNGFISSRTISQLFDPEKEMFLPDRFVKGTCPKCKSEDQYGDNCDACGETYSPTELINPKSAVSGATPVMKDSEHFFFDLPQFESMLKEWTRSGSLQTETANKMQEWFESGLQQWDISRDAPYFGFEIPGEKDKFFYVWLDAPIGYMGSFKNLCDKRDDLDFDEYWNKDSKTELYHFIGKDIVYFHSLFWPAMLDGSGFRKPNNVFVHGYVTVNGAKMSKSKGTFVKASTYLEHLDPECLRYYYAAKLNSRIDDLDLNLEDFTQRVNADVVNKIVNLASRNAGFIAKRFEGKLAENFVEPELYNEFVAAADRIAELYEAREFGRAIREITALADKANQYVDEKAPWVVAKQEGKDQELQEICSVGINLFRVLMTYLKPVMPALAARTEAFLNEELTWEGVAQPLTAHEITAFKALFNRIDPKNIEAMIEASKEDAAAEMAAKEKAEASNAAQETELSKDPIAEEIEFDDFAKVDLRIAKIVSCESVPKADKLLKFQLDIGGEMRQVFSGIKAAYNPEDLVGKYTVVVANLKPRKMKFGMSEGMILAAGPGGKDLWILEPHEGAQPGMRVM.

Residues 20–30 (PYANGSIHLGH) carry the 'HIGH' region motif. Residues C151, C154, C164, and C167 each contribute to the Zn(2+) site. Residues 337–341 (KMSKS) carry the 'KMSKS' region motif. Position 340 (K340) interacts with ATP. Residues 589–690 (DFAKVDLRIA…EGAQPGMRVM (102 aa)) enclose the tRNA-binding domain.

Belongs to the class-I aminoacyl-tRNA synthetase family. MetG type 1 subfamily. In terms of assembly, homodimer. Zn(2+) serves as cofactor.

The protein localises to the cytoplasm. The enzyme catalyses tRNA(Met) + L-methionine + ATP = L-methionyl-tRNA(Met) + AMP + diphosphate. Functionally, is required not only for elongation of protein synthesis but also for the initiation of all mRNA translation through initiator tRNA(fMet) aminoacylation. This chain is Methionine--tRNA ligase, found in Vibrio vulnificus (strain YJ016).